The primary structure comprises 342 residues: [Citrate [pro-3S]-lyase] ligase (342 aa).

The N-acetyltransferase domain maps to 1–127 (MTLILKRVQL…RAVLMENSRE (127 aa)).

It carries out the reaction holo-[citrate lyase ACP] + acetate + ATP = acetyl-[citrate lyase ACP] + AMP + diphosphate. In terms of biological role, acetylation of prosthetic group (2-(5''-phosphoribosyl)-3'-dephosphocoenzyme-A) of the gamma subunit of citrate lyase. This is [Citrate [pro-3S]-lyase] ligase (citC) from Klebsiella pneumoniae.